The following is a 229-amino-acid chain: Protein GrpE (229 aa).

2 disordered regions span residues 1–49 and 207–229; these read MTEG…SANS and DSTA…EDGD. A compositionally biased stretch (basic and acidic residues) spans 13 to 24; that stretch reads TDKRRIDPDTGE.

Belongs to the GrpE family. Homodimer.

The protein resides in the cytoplasm. Participates actively in the response to hyperosmotic and heat shock by preventing the aggregation of stress-denatured proteins, in association with DnaK and GrpE. It is the nucleotide exchange factor for DnaK and may function as a thermosensor. Unfolded proteins bind initially to DnaJ; upon interaction with the DnaJ-bound protein, DnaK hydrolyzes its bound ATP, resulting in the formation of a stable complex. GrpE releases ADP from DnaK; ATP binding to DnaK triggers the release of the substrate protein, thus completing the reaction cycle. Several rounds of ATP-dependent interactions between DnaJ, DnaK and GrpE are required for fully efficient folding. This Mycobacterium leprae (strain TN) protein is Protein GrpE.